The primary structure comprises 262 residues: Large ribosomal subunit protein uL10m (262 aa).

Residues 1 to 28 constitute a mitochondrion transit peptide; it reads MAAAVAGILRGGLPPRAAWLPTLQTVRH. The segment at 243–262 is disordered; sequence GDCATSANEKLHPPDPAPDA.

Belongs to the universal ribosomal protein uL10 family. In terms of assembly, component of the mitochondrial ribosome large subunit (39S) which comprises a 16S rRNA and about 50 distinct proteins.

It localises to the mitochondrion. In Mus musculus (Mouse), this protein is Large ribosomal subunit protein uL10m (Mrpl10).